The chain runs to 120 residues: Large ribosomal subunit protein bL20 (120 aa).

The protein belongs to the bacterial ribosomal protein bL20 family.

Its function is as follows. Binds directly to 23S ribosomal RNA and is necessary for the in vitro assembly process of the 50S ribosomal subunit. It is not involved in the protein synthesizing functions of that subunit. This Paracidovorax citrulli (strain AAC00-1) (Acidovorax citrulli) protein is Large ribosomal subunit protein bL20.